The sequence spans 492 residues: Glutamyl-tRNA(Gln) amidotransferase subunit A (492 aa).

Catalysis depends on charge relay system residues lysine 78 and serine 158. Serine 182 serves as the catalytic Acyl-ester intermediate.

It belongs to the amidase family. GatA subfamily. In terms of assembly, heterotrimer of A, B and C subunits.

It carries out the reaction L-glutamyl-tRNA(Gln) + L-glutamine + ATP + H2O = L-glutaminyl-tRNA(Gln) + L-glutamate + ADP + phosphate + H(+). Allows the formation of correctly charged Gln-tRNA(Gln) through the transamidation of misacylated Glu-tRNA(Gln) in organisms which lack glutaminyl-tRNA synthetase. The reaction takes place in the presence of glutamine and ATP through an activated gamma-phospho-Glu-tRNA(Gln). In Orientia tsutsugamushi (strain Boryong) (Rickettsia tsutsugamushi), this protein is Glutamyl-tRNA(Gln) amidotransferase subunit A.